Here is a 155-residue protein sequence, read N- to C-terminus: Small ribosomal subunit protein uS7c (155 aa).

Belongs to the universal ribosomal protein uS7 family. In terms of assembly, part of the 30S ribosomal subunit.

It is found in the plastid. It localises to the chloroplast. Its function is as follows. One of the primary rRNA binding proteins, it binds directly to 16S rRNA where it nucleates assembly of the head domain of the 30S subunit. This chain is Small ribosomal subunit protein uS7c (rps7), found in Pinus thunbergii (Japanese black pine).